The following is a 372-amino-acid chain: Gustatory and pheromone receptor 39a, isoform B (372 aa).

The Cytoplasmic segment spans residues 1 to 32 (MGTRNRKLLFFLHYQRYLGLTNLDFSKSLHIY). A helical transmembrane segment spans residues 33–53 (WLHGTWSSTAIQIVVVGVFMA). Topologically, residues 54-59 (ALLGAL) are extracellular. The chain crosses the membrane as a helical span at residues 60–80 (AESLYYMETKSQTGNTFDNAV). The Cytoplasmic segment spans residues 81–122 (ILTTSVTQLLANLWLRSQQKSQVNLLQRLSQVVELLQFEPYA). The helical transmembrane segment at 123 to 143 (VPQFRWLYRIWLLVCLIYGAM) threads the bilayer. Residues 144 to 147 (VTHF) are Extracellular-facing. A helical membrane pass occupies residues 148 to 168 (GINWLTTMQISRVLTLIGFVY). At 169 to 224 (RCVLANFQFTCYTGMVVILKKLLQVQVKQLEHLVSTTTISMAGVAGCLRTHDEILL) the chain is on the cytoplasmic side. Residues 225–245 (LGQRELIAVYGGVILFLFIYQ) form a helical membrane-spanning segment. The Extracellular segment spans residues 246-265 (VMQCILIFYISNLEGFHSSN). Residues 266 to 286 (DLVLIFCWLAPMLFYLILPLV) traverse the membrane as a helical segment. The Cytoplasmic segment spans residues 287-348 (VNDIHNQANK…KSTLFKLFTA (62 aa)). A helical membrane pass occupies residues 349–368 (IFTYMVILVQFKEMENSTKS). Position 369 (isoleucine 369) is a topological domain, extracellular.

Belongs to the insect chemoreceptor superfamily. Gustatory receptor (GR) family. Gr21a subfamily. In terms of tissue distribution, expressed in the adult labellar chemosensory neurons. In larvae, is expressed in neurons of the terminal external chemosensory organ, as well as in the dorsal and posterior pharyngeal sense organs.

The protein resides in the cell membrane. Its function is as follows. Gustatory receptor which mediates acceptance or avoidance behavior, depending on its substrates. Plays a role in sustaining courtship behavior in males, possibly through the reception of a stimulating arrestant pheromone. This is Gustatory and pheromone receptor 39a, isoform B (Gr39a) from Drosophila melanogaster (Fruit fly).